The following is a 234-amino-acid chain: ATP synthase subunit delta, chloroplastic (234 aa).

The N-terminal 47 residues, 1–47 (MASLQQTLFSLQSKLPPSSFQIARSLPLRKTFPIRINNGGNAAGARM), are a transit peptide targeting the chloroplast. An N-acetylserine modification is found at serine 48. N-linked (GlcNAc...) asparagine glycosylation is present at asparagine 66. Threonine 234 carries the post-translational modification Phosphothreonine.

This sequence belongs to the ATPase delta chain family. F-type ATPases have 2 components, F(1) - the catalytic core - and F(0) - the membrane proton channel. F(1) has five subunits: alpha(3), beta(3), gamma(1), delta(1), epsilon(1). CF(0) has four main subunits: a(1), b(1), b'(1) and c(10-14). The alpha and beta chains form an alternating ring which encloses part of the gamma chain. F(1) is attached to F(0) by a central stalk formed by the gamma and epsilon chains, while a peripheral stalk is formed by the delta, b and b' chains.

Its subcellular location is the plastid. It localises to the chloroplast thylakoid membrane. Functionally, f(1)F(0) ATP synthase produces ATP from ADP in the presence of a proton or sodium gradient. F-type ATPases consist of two structural domains, F(1) containing the extramembraneous catalytic core and F(0) containing the membrane proton channel, linked together by a central stalk and a peripheral stalk. During catalysis, ATP synthesis in the catalytic domain of F(1) is coupled via a rotary mechanism of the central stalk subunits to proton translocation (Potential). Essential for photosynthesis, probably by facilitating electron transport in both photosystems I and II. In terms of biological role, this protein is part of the stalk that links CF(0) to CF(1). It either transmits conformational changes from CF(0) to CF(1) or is implicated in proton conduction. This Arabidopsis thaliana (Mouse-ear cress) protein is ATP synthase subunit delta, chloroplastic.